The sequence spans 432 residues: Alpha-ketoglutarate permease (432 aa).

The Cytoplasmic portion of the chain corresponds to Met1–Leu32. A helical membrane pass occupies residues Val33 to Phe53. Over Pro54–Leu62 the chain is Periplasmic. The helical transmembrane segment at Leu63–Phe83 threads the bilayer. Over Gly84–Ser95 the chain is Cytoplasmic. The helical transmembrane segment at Met96–Tyr116 threads the bilayer. Residues Glu117–Thr118 lie on the Periplasmic side of the membrane. Residues Ile119–Gly139 form a helical membrane-spanning segment. At Gly140–Ala162 the chain is on the cytoplasmic side. A helical transmembrane segment spans residues Ser163–Leu183. The Periplasmic portion of the chain corresponds to Gln184–Arg193. Residues Glu194–Leu214 traverse the membrane as a helical segment. Residues Arg215–Arg243 are Cytoplasmic-facing. A helical membrane pass occupies residues Ala244–Thr264. At Tyr265 to Asn279 the chain is on the periplasmic side. Residues Val280 to Gly300 traverse the membrane as a helical segment. The Cytoplasmic portion of the chain corresponds to Ala301–Arg309. A helical transmembrane segment spans residues Thr310–Leu330. At Gln331–Ala339 the chain is on the periplasmic side. A helical transmembrane segment spans residues Phe340 to Leu360. Over Lys361–Gly373 the chain is Cytoplasmic. Residues Val374–Leu394 form a helical membrane-spanning segment. Topologically, residues Ser395 to Glu402 are periplasmic. The helical transmembrane segment at Thr403–Leu423 threads the bilayer. Over His424–Leu432 the chain is Cytoplasmic.

The protein belongs to the major facilitator superfamily. Metabolite:H+ Symporter (MHS) family (TC 2.A.1.6) family.

Its subcellular location is the cell inner membrane. Its function is as follows. Uptake of alpha-ketoglutarate across the boundary membrane with the concomitant import of a cation (symport system). This Escherichia coli (strain K12) protein is Alpha-ketoglutarate permease (kgtP).